Reading from the N-terminus, the 299-residue chain is MAIGIIAEYNPFHNGHIYMINYIKNKFPNEEIIVFMSGKYTQRGEIAVASFETRKKYVLEAGVSKVYELPFETSTQAAHIFAQGAIKMLYEYNVDKLIFGSETNDIDLFYKIANTLKNNEQEYNLKLKEFLKQGLGFPNASSLALKSLVGYEIVMPNDILGLEYVKAIVNNNYNIQAYCLKRTINFHSEFTLENFASASYLRTLIYKSEDISKYSPMIFETIPDRIENYYEEFKQKVISTSKEELAKISLISEGLENRFKKIVLEAQDYDSFVNKANSKRYTSSRIKRIMLYILLDIKK.

ATP-binding positions include 6 to 19, Gly-100, Asn-157, and Arg-182; that span reads IAEY…HIYM.

This sequence belongs to the TmcAL family.

Its subcellular location is the cytoplasm. It carries out the reaction cytidine(34) in elongator tRNA(Met) + acetate + ATP = N(4)-acetylcytidine(34) in elongator tRNA(Met) + AMP + diphosphate. Catalyzes the formation of N(4)-acetylcytidine (ac(4)C) at the wobble position of elongator tRNA(Met), using acetate and ATP as substrates. First activates an acetate ion to form acetyladenylate (Ac-AMP) and then transfers the acetyl group to tRNA to form ac(4)C34. The polypeptide is tRNA(Met) cytidine acetate ligase (Mycoplasma mobile (strain ATCC 43663 / 163K / NCTC 11711) (Mesomycoplasma mobile)).